The primary structure comprises 88 residues: uncharacterized protein (88 aa).

A run of 2 helical transmembrane segments spans residues 13–33 (FLAFLVSQLYFNFVELTGWGP) and 62–82 (WFNIITVFLGVFTIIQIITGI).

The protein resides in the cell membrane. This is an uncharacterized protein from Bacillus subtilis (strain 168).